We begin with the raw amino-acid sequence, 443 residues long: Ribosomal protein uS12 methylthiotransferase RimO (443 aa).

Residues P10–P120 form the MTTase N-terminal domain. Residues C19, C55, C84, C151, C155, and C158 each contribute to the [4Fe-4S] cluster site. The Radical SAM core domain occupies L137 to R375. One can recognise a TRAM domain in the interval E377–V443.

It belongs to the methylthiotransferase family. RimO subfamily. [4Fe-4S] cluster is required as a cofactor.

It localises to the cytoplasm. The enzyme catalyses L-aspartate(89)-[ribosomal protein uS12]-hydrogen + (sulfur carrier)-SH + AH2 + 2 S-adenosyl-L-methionine = 3-methylsulfanyl-L-aspartate(89)-[ribosomal protein uS12]-hydrogen + (sulfur carrier)-H + 5'-deoxyadenosine + L-methionine + A + S-adenosyl-L-homocysteine + 2 H(+). Functionally, catalyzes the methylthiolation of an aspartic acid residue of ribosomal protein uS12. This is Ribosomal protein uS12 methylthiotransferase RimO from Azoarcus sp. (strain BH72).